Reading from the N-terminus, the 84-residue chain is Venom protein SynTx (84 aa).

An N-terminal signal peptide occupies residues 1-19 (TLLLTLVVVTIVCLDLGYT). 4 cysteine pairs are disulfide-bonded: cysteine 22-cysteine 43, cysteine 36-cysteine 61, cysteine 65-cysteine 76, and cysteine 77-cysteine 82.

The protein belongs to the three-finger toxin family. Short-chain subfamily. Aminergic toxin sub-subfamily. In terms of assembly, homodimer; disulfide-linked. In terms of tissue distribution, expressed by the venom gland.

The protein resides in the secreted. Functionally, this protein shows a synergetic toxic effect in that it enhances the toxicity of other toxins. The polypeptide is Venom protein SynTx (Dendroaspis jamesoni jamesoni (Jameson's mamba)).